Consider the following 430-residue polypeptide: Adenylosuccinate synthetase (430 aa).

Residues 12 to 18 and 40 to 42 contribute to the GTP site; these read GDEGKGK and GHT. The Proton acceptor role is filled by Asp13. Mg(2+)-binding residues include Asp13 and Gly40. Residues 13-16, 38-41, Thr128, Arg142, Gln223, Thr238, and Arg302 each bind IMP; these read DEGK and NAGH. His41 functions as the Proton donor in the catalytic mechanism. Residue 298–304 participates in substrate binding; the sequence is TTTGRPR. Residues Arg304, 330–332, and 412–414 contribute to the GTP site; these read SID and SVG.

This sequence belongs to the adenylosuccinate synthetase family. As to quaternary structure, homodimer. The cofactor is Mg(2+).

The protein resides in the cytoplasm. The enzyme catalyses IMP + L-aspartate + GTP = N(6)-(1,2-dicarboxyethyl)-AMP + GDP + phosphate + 2 H(+). It participates in purine metabolism; AMP biosynthesis via de novo pathway; AMP from IMP: step 1/2. Functionally, plays an important role in the de novo pathway of purine nucleotide biosynthesis. Catalyzes the first committed step in the biosynthesis of AMP from IMP. This is Adenylosuccinate synthetase from Enterococcus faecalis (strain ATCC 700802 / V583).